A 441-amino-acid polypeptide reads, in one-letter code: Serine hydroxymethyltransferase (441 aa).

(6S)-5,6,7,8-tetrahydrofolate is bound by residues L119 and 123–125; that span reads GHL. At K228 the chain carries N6-(pyridoxal phosphate)lysine. A (6S)-5,6,7,8-tetrahydrofolate-binding site is contributed by 370 to 372; the sequence is SPF.

It belongs to the SHMT family. In terms of assembly, homodimer. Requires pyridoxal 5'-phosphate as cofactor.

It localises to the cytoplasm. It catalyses the reaction (6R)-5,10-methylene-5,6,7,8-tetrahydrofolate + glycine + H2O = (6S)-5,6,7,8-tetrahydrofolate + L-serine. It functions in the pathway one-carbon metabolism; tetrahydrofolate interconversion. Its pathway is amino-acid biosynthesis; glycine biosynthesis; glycine from L-serine: step 1/1. Its function is as follows. Catalyzes the reversible interconversion of serine and glycine with tetrahydrofolate (THF) serving as the one-carbon carrier. This reaction serves as the major source of one-carbon groups required for the biosynthesis of purines, thymidylate, methionine, and other important biomolecules. Also exhibits THF-independent aldolase activity toward beta-hydroxyamino acids, producing glycine and aldehydes, via a retro-aldol mechanism. In Chlorobium phaeovibrioides (strain DSM 265 / 1930) (Prosthecochloris vibrioformis (strain DSM 265)), this protein is Serine hydroxymethyltransferase.